We begin with the raw amino-acid sequence, 308 residues long: MVSSNCSTEDSFKYTLYGCVFSMVFVLGLIANCVAIYIFTFTLKVRNETTTYMLNLAISDLLFVFTLPFRIYYFVVRNWPFGDVLCKISVTLFYTNMYGSILFLTCISVDRFLAIVHPFRSKTLRTKRNARIVCVAVWITVLAGSTPASFFQSTNRQNNTEQRTCFENFPESTWKTYLSRIVIFIEIVGFFIPLILNVTCSTMVLRTLNKPLTLSRNKLSKKKVLKMIFVHLVIFCFCFVPYNITLILYSLMRTQTWINCSVVTAVRTMYPVTLCIAVSNCCFDPIVYYFTSDTNSELDKKQQVHQNT.

The Extracellular portion of the chain corresponds to 1–16 (MVSSNCSTEDSFKYTL). An N-linked (GlcNAc...) asparagine glycan is attached at Asn-5. Residues 17–43 (YGCVFSMVFVLGLIANCVAIYIFTFTL) form a helical membrane-spanning segment. Residues 44–52 (KVRNETTTY) lie on the Cytoplasmic side of the membrane. The helical transmembrane segment at 53 to 76 (MLNLAISDLLFVFTLPFRIYYFVV) threads the bilayer. The Extracellular portion of the chain corresponds to 77–89 (RNWPFGDVLCKIS). Cys-86 and Cys-165 form a disulfide bridge. A helical membrane pass occupies residues 90–109 (VTLFYTNMYGSILFLTCISV). At 110 to 130 (DRFLAIVHPFRSKTLRTKRNA) the chain is on the cytoplasmic side. Residues 131-151 (RIVCVAVWITVLAGSTPASFF) form a helical membrane-spanning segment. Over 152–178 (QSTNRQNNTEQRTCFENFPESTWKTYL) the chain is Extracellular. A helical transmembrane segment spans residues 179–206 (SRIVIFIEIVGFFIPLILNVTCSTMVLR). At 207–224 (TLNKPLTLSRNKLSKKKV) the chain is on the cytoplasmic side. The chain crosses the membrane as a helical span at residues 225 to 250 (LKMIFVHLVIFCFCFVPYNITLILYS). Over 251–269 (LMRTQTWINCSVVTAVRTM) the chain is Extracellular. A helical membrane pass occupies residues 270-289 (YPVTLCIAVSNCCFDPIVYY). Cys-281 carries the S-palmitoyl cysteine lipid modification. Residues 290-308 (FTSDTNSELDKKQQVHQNT) are Cytoplasmic-facing.

This sequence belongs to the G-protein coupled receptor 1 family. In terms of tissue distribution, induced in activated T-cells.

The protein localises to the cell membrane. Binds to oleoyl-L-alpha-lysophosphatidic acid (LPA). Intracellular cAMP is involved in the receptor activation. The protein is Lysophosphatidic acid receptor 6 (LPAR6) of Gallus gallus (Chicken).